The sequence spans 616 residues: Chaperone protein HscA (616 aa).

Belongs to the heat shock protein 70 family.

Its function is as follows. Chaperone involved in the maturation of iron-sulfur cluster-containing proteins. Has a low intrinsic ATPase activity which is markedly stimulated by HscB. Involved in the maturation of IscU. The sequence is that of Chaperone protein HscA from Escherichia coli O45:K1 (strain S88 / ExPEC).